A 1705-amino-acid chain; its full sequence is Homeobox-DDT domain protein RLT1 (1705 aa).

Disordered stretches follow at residues 1 to 53 (MEMG…QLET), 118 to 167 (ELPA…EYET), 237 to 267 (HDPR…TPNM), 296 to 322 (GPVP…MPSP), and 352 to 414 (GVRK…RKEE). A DNA-binding region (homeobox) is located at residues 39–98 (VKPKRQMKTPFQLETLEKVYSEEKYPSEATRAELSEKLDLSDRQLQMWFCHRRLKDKKDG). Over residues 136–159 (GSESGCSPYSNSRRNFASGSSSSR) the composition is skewed to low complexity. 2 stretches are compositionally biased toward polar residues: residues 253-265 (EQQS…SFTP) and 310-319 (RNCSTSQQDM). Residues 549–608 (DETVGNLLMVWRFLISFSDVLDLWPFTLDEFIQAFHDYDSRLLGEIHVTLLRSIIRDVED) form the DDT domain. The region spanning 731 to 800 (GTVKFAAFHV…APSTYCVRAP (70 aa)) is the HTH HARE-type domain. 5 disordered regions span residues 1028–1053 (TRER…DLSN), 1198–1229 (VNHS…SIRV), 1441–1502 (PEDE…KAQS), 1561–1635 (PKSE…FVDY), and 1652–1705 (AIEE…SSDS). The segment covering 1201–1220 (SPTDSVSPSSSAISGSNSDS) has biased composition (low complexity). Basic and acidic residues predominate over residues 1455 to 1465 (SPFKGKGPREQ). 3 stretches are compositionally biased toward acidic residues: residues 1565–1574 (EVEEDEEEEE), 1611–1628 (VDDE…DEDG), and 1669–1684 (GEDD…DDDV).

Interacts with CHR11 and CHR17. Interacts (via the DDT domain) with CHR11 (via C-terminus). In terms of tissue distribution, highly expressed in growing tissues such as inflorescence and flower meristems, young leaves and floral organs. Expressed in roots, rosette and cauline leaves, stems, flowers, inflorescences and siliques.

Its subcellular location is the nucleus. In terms of biological role, transcriptional regulator required for the maintenance of the plant vegetative phase. In association with CHR11 or CHR17 may prevent the early activation of the vegetative-to-reproductive transition by regulating key genes that contribute to flower timing, such as FT, SEP1, SEP3, AGL8/FUL, SOC1 and FLC. In Arabidopsis thaliana (Mouse-ear cress), this protein is Homeobox-DDT domain protein RLT1.